The sequence spans 683 residues: Dixin (683 aa).

A lipid anchor (N-myristoyl glycine) is attached at L2. Residues 20–127 (EQQLQAYVAW…LVLALAAHFK (108 aa)) enclose the Calponin-homology (CH) domain. The actin-binding stretch occupies residues 127–300 (KPGSSRTVNQ…LEKEMEEAKK (174 aa)). S186 carries the post-translational modification Phosphoserine. Residues 207-235 (GQQRSPSESSCSSLTSPSPIHSAKSESII) form a disordered region. Residues 211-228 (SPSESSCSSLTSPSPIHS) are compositionally biased toward low complexity. Position 231 is a phosphoserine (S231). A coiled-coil region spans residues 279–452 (SWEEQLLEQQ…EALRKLSDVS (174 aa)). Positions 482–492 (NYNSHNSQSNG) are enriched in polar residues. Disordered stretches follow at residues 482 to 509 (NYNSHNSQSNGFLLPTAGKGATSVSNRG) and 556 to 594 (TQKKQERKVRVKSPRTQVGSEYRESWPPNSKLPHSQSSP). Position 590 is a phosphoserine (S590). Residues 600 to 680 (CTKVLYFTDR…KIVAWVEEDH (81 aa)) enclose the DIX domain.

It belongs to the DIXDC1 family. As to quaternary structure, isoform 1 but not isoform 2 binds filamentous actin. Interacts with the complex composed of DVL2 and Rac. Interacts with AXIN1; competes with MAP3K1. Interacts with MAP3K4 preventing MAP3K4 interaction with AXIN1. Directly interacts (via DIX domain) with DVL2 (via DIX domain). Interacts with gamma-tubulin. Phosphorylated on tyrosine and serine residues. Post-translationally, polyubiquitinated, leading to its proteasomal degradation. WNT3A signaling increases DIXDC1 protein levels by inhibiting its ubiquitination and subsequent degradation. As to expression, ubiquitously expressed with higher expression in cardiac and skeletal muscles.

The protein resides in the cell junction. The protein localises to the focal adhesion. Its subcellular location is the cytoplasm. It localises to the cytoskeleton. It is found in the stress fiber. Functionally, positive effector of the Wnt signaling pathway; activates WNT3A signaling via DVL2. Regulates JNK activation by AXIN1 and DVL2. This Homo sapiens (Human) protein is Dixin (DIXDC1).